A 205-amino-acid polypeptide reads, in one-letter code: GTP cyclohydrolase-2 (205 aa).

Position 49–53 (49–53 (RLHSE)) interacts with GTP. Residues cysteine 54, cysteine 65, and cysteine 67 each coordinate Zn(2+). GTP-binding positions include glutamine 70, 92–94 (EGR), and threonine 114. The active-site Proton acceptor is aspartate 126. The active-site Nucleophile is arginine 128. The GTP site is built by threonine 149 and lysine 154.

This sequence belongs to the GTP cyclohydrolase II family. Zn(2+) is required as a cofactor.

The catalysed reaction is GTP + 4 H2O = 2,5-diamino-6-hydroxy-4-(5-phosphoribosylamino)-pyrimidine + formate + 2 phosphate + 3 H(+). It participates in cofactor biosynthesis; riboflavin biosynthesis; 5-amino-6-(D-ribitylamino)uracil from GTP: step 1/4. Its function is as follows. Catalyzes the conversion of GTP to 2,5-diamino-6-ribosylamino-4(3H)-pyrimidinone 5'-phosphate (DARP), formate and pyrophosphate. This Pseudomonas putida (strain GB-1) protein is GTP cyclohydrolase-2.